We begin with the raw amino-acid sequence, 396 residues long: Probable peptidoglycan glycosyltransferase FtsW (396 aa).

The Cytoplasmic segment spans residues 1 to 27; it reads MPFLDKVKQQYEDWTRITPSNLLYDRA. Residues 28–48 form a helical membrane-spanning segment; the sequence is LLLLFFVLLLIGLLAVSSASI. Over 49–64 the chain is Periplasmic; that stretch reads PVGTRLFKDPFYFAKR. Residues 65-85 traverse the membrane as a helical segment; it reads DAIYVFLSCVTCYLCVQVPME. Residues 86–93 lie on the Cytoplasmic side of the membrane; sequence KWEQWHVR. The helical transmembrane segment at 94–114 threads the bilayer; that stretch reads LFAFAIFLLILVLIPGIGLSV. Residues 115-122 are Periplasmic-facing; that stretch reads NGARRWIP. A helical membrane pass occupies residues 123–143; sequence MVLFNFQPAEFAKLALTCFLA. Residues 144–157 lie on the Cytoplasmic side of the membrane; the sequence is SYFTRKYDEVRSRK. The chain crosses the membrane as a helical span at residues 158–178; that stretch reads LSAFKPFALMGLMGLFLLSQP. Over 179 to 183 the chain is Periplasmic; sequence DLGST. The next 2 helical transmembrane spans lie at 184 to 204 and 205 to 225; these read VVLF…FWQF and VGLM…SAYR. The Periplasmic segment spans residues 226–285; the sequence is LKRFTGFLDPFKDPYGTGFQLSNSLMAFGRGEWVGEGLGNSIQKLEYLPEAHTDFVMAVV. A helical membrane pass occupies residues 286–306; that stretch reads GEEFGFLGILVIVILLGLLIF. Residues 307-323 are Cytoplasmic-facing; that stretch reads RAMKIGRESLLLEQRFK. A helical membrane pass occupies residues 324 to 344; it reads GFFAFGISFWIFFQGFVNLGM. The Periplasmic segment spans residues 345 to 355; it reads SLGLLPTKGLT. A helical transmembrane segment spans residues 356 to 376; the sequence is FPLISYGGSSLIIMSMTIGLL. Over 377–396 the chain is Cytoplasmic; that stretch reads LRIDHENRLMRIGQARLRDD.

This sequence belongs to the SEDS family. FtsW subfamily.

It is found in the cell inner membrane. It catalyses the reaction [GlcNAc-(1-&gt;4)-Mur2Ac(oyl-L-Ala-gamma-D-Glu-L-Lys-D-Ala-D-Ala)](n)-di-trans,octa-cis-undecaprenyl diphosphate + beta-D-GlcNAc-(1-&gt;4)-Mur2Ac(oyl-L-Ala-gamma-D-Glu-L-Lys-D-Ala-D-Ala)-di-trans,octa-cis-undecaprenyl diphosphate = [GlcNAc-(1-&gt;4)-Mur2Ac(oyl-L-Ala-gamma-D-Glu-L-Lys-D-Ala-D-Ala)](n+1)-di-trans,octa-cis-undecaprenyl diphosphate + di-trans,octa-cis-undecaprenyl diphosphate + H(+). It participates in cell wall biogenesis; peptidoglycan biosynthesis. Its function is as follows. Peptidoglycan polymerase that is essential for cell division. The polypeptide is Probable peptidoglycan glycosyltransferase FtsW (Pasteurella multocida (strain Pm70)).